A 148-amino-acid chain; its full sequence is Large ribosomal subunit protein bL9 (148 aa).

Belongs to the bacterial ribosomal protein bL9 family.

Its function is as follows. Binds to the 23S rRNA. In Thermus thermophilus, this protein is Large ribosomal subunit protein bL9.